The sequence spans 704 residues: Metabotropic glutamate receptor-like protein K (704 aa).

The N-terminal stretch at 1-21 (MIKLILSIILIICFIINSIES) is a signal peptide. At 22-383 (FKMITLTTGP…SKVEFQRSIQ (362 aa)) the chain is on the extracellular side. N-linked (GlcNAc...) asparagine glycosylation is found at N66, N104, N256, N286, N308, N337, N343, and N368. A helical transmembrane segment spans residues 384-404 (IGFSIVSGLLIGFVILMMIGI). Residues 405-419 (VKYQDTPSIRSASPS) lie on the Cytoplasmic side of the membrane. Residues 420-440 (FLNLTLLGGVIIFIGIIVWVA) form a helical membrane-spanning segment. Over 441–455 (PISTHQCNARFWLVT) the chain is Extracellular. The chain crosses the membrane as a helical span at residues 456 to 476 (IGFSTLIGSLVVKNIRIWLIF). Residues 477–492 (DNPELKIRTITNNQLY) lie on the Cytoplasmic side of the membrane. The chain crosses the membrane as a helical span at residues 493 to 513 (PWVGLCLVINIVLMSIITTVG). Topologically, residues 514–541 (DLKAIEAQGIDSLGKFEYMTICKMNYTG) are extracellular. The N-linked (GlcNAc...) asparagine glycan is linked to N538. A helical membrane pass occupies residues 542-562 (AATLYSILAYFGTLLLVGVFV). Residues 563 to 578 (SWKIRIVHIEEFSECT) lie on the Cytoplasmic side of the membrane. Residues 579–599 (AIAKTLYSISFCLFVIVPLMI) traverse the membrane as a helical segment. Over 600 to 608 (SPQDKQSET) the chain is Extracellular. Residues 609–629 (IILCVTGIFITTGALLIFFLP) traverse the membrane as a helical segment. Residues 630–704 (KFWRIFGNEK…NESSLSNETK (75 aa)) lie on the Cytoplasmic side of the membrane. Disordered regions lie at residues 657–677 (ARAE…SKSS) and 685–704 (SGIE…NETK).

This sequence in the N-terminal section; belongs to the BMP lipoprotein family. It in the C-terminal section; belongs to the G-protein coupled receptor 3 family. GABA-B receptor subfamily.

It localises to the membrane. This is Metabotropic glutamate receptor-like protein K (grlK) from Dictyostelium discoideum (Social amoeba).